The primary structure comprises 206 residues: ATP synthase subunit b (206 aa).

A helical transmembrane segment spans residues 14–34 (VMMPAAVCAAVIGLSALGFAA).

It belongs to the ATPase B chain family. In terms of assembly, F-type ATPases have 2 components, F(1) - the catalytic core - and F(0) - the membrane proton channel. F(1) has five subunits: alpha(3), beta(3), gamma(1), delta(1), epsilon(1). F(0) has three main subunits: a(1), b(2) and c(10-14). The alpha and beta chains form an alternating ring which encloses part of the gamma chain. F(1) is attached to F(0) by a central stalk formed by the gamma and epsilon chains, while a peripheral stalk is formed by the delta and b chains.

Its subcellular location is the cell inner membrane. Functionally, f(1)F(0) ATP synthase produces ATP from ADP in the presence of a proton or sodium gradient. F-type ATPases consist of two structural domains, F(1) containing the extramembraneous catalytic core and F(0) containing the membrane proton channel, linked together by a central stalk and a peripheral stalk. During catalysis, ATP synthesis in the catalytic domain of F(1) is coupled via a rotary mechanism of the central stalk subunits to proton translocation. In terms of biological role, component of the F(0) channel, it forms part of the peripheral stalk, linking F(1) to F(0). In Geobacter metallireducens (strain ATCC 53774 / DSM 7210 / GS-15), this protein is ATP synthase subunit b.